The chain runs to 38 residues: Photosystem II reaction center protein L (38 aa).

Residues 17 to 37 traverse the membrane as a helical segment; sequence SLYWGLLLIFVLAVLFSNYSF.

The protein belongs to the PsbL family. In terms of assembly, PSII is composed of 1 copy each of membrane proteins PsbA, PsbB, PsbC, PsbD, PsbE, PsbF, PsbH, PsbI, PsbJ, PsbK, PsbL, PsbM, PsbT, PsbX, PsbY, PsbZ, Psb30/Ycf12, at least 3 peripheral proteins of the oxygen-evolving complex and a large number of cofactors. It forms dimeric complexes.

It localises to the plastid. It is found in the chloroplast thylakoid membrane. Its function is as follows. One of the components of the core complex of photosystem II (PSII). PSII is a light-driven water:plastoquinone oxidoreductase that uses light energy to abstract electrons from H(2)O, generating O(2) and a proton gradient subsequently used for ATP formation. It consists of a core antenna complex that captures photons, and an electron transfer chain that converts photonic excitation into a charge separation. This subunit is found at the monomer-monomer interface and is required for correct PSII assembly and/or dimerization. The polypeptide is Photosystem II reaction center protein L (Bowenia serrulata (Byfield fern)).